We begin with the raw amino-acid sequence, 96 residues long: Putative pterin-4-alpha-carbinolamine dehydratase (96 aa).

The protein belongs to the pterin-4-alpha-carbinolamine dehydratase family.

The catalysed reaction is (4aS,6R)-4a-hydroxy-L-erythro-5,6,7,8-tetrahydrobiopterin = (6R)-L-erythro-6,7-dihydrobiopterin + H2O. In Prochlorococcus marinus (strain MIT 9215), this protein is Putative pterin-4-alpha-carbinolamine dehydratase.